Reading from the N-terminus, the 125-residue chain is Large ribosomal subunit protein bL19 (125 aa).

It belongs to the bacterial ribosomal protein bL19 family.

In terms of biological role, this protein is located at the 30S-50S ribosomal subunit interface and may play a role in the structure and function of the aminoacyl-tRNA binding site. The chain is Large ribosomal subunit protein bL19 from Ehrlichia canis (strain Jake).